Consider the following 92-residue polypeptide: Small ribosomal subunit protein uS19 (92 aa).

It belongs to the universal ribosomal protein uS19 family.

Its function is as follows. Protein S19 forms a complex with S13 that binds strongly to the 16S ribosomal RNA. This Rhizobium rhizogenes (strain K84 / ATCC BAA-868) (Agrobacterium radiobacter) protein is Small ribosomal subunit protein uS19.